The chain runs to 261 residues: MASPDWGYDDKNGPEQWSKLYPIANGNNQSPVDIKTSEAKHDTSLKPISVSYNPATAKEIINVGHSFHVNFEDNDNRSVLKGGPFSDSYRLFQFHFHWGSSNEYGSEHTVDGVKYSSELHIVHWNSAKYSSLAEAVSKADGLAVIGVLMKVGEANPKLQKVLDALHAIKTKGKRAPFTNFDPSTLLPSSLDFWTYSGSLTHPPLYESVTWIICKESISVSSEQLAQFRSLLSNVEGSNPVPIQRNNRPTQPLKGRTVRASF.

At A2 the chain carries N-acetylalanine. One can recognise an Alpha-carbonic anhydrase domain in the interval P4–F261. H65 serves as the catalytic Proton donor/acceptor. Zn(2+)-binding residues include H95, H97, and H120. Substrate is bound by residues T200 and T200 to H201. Residues N238–F261 form a disordered region.

Belongs to the alpha-carbonic anhydrase family. Requires Zn(2+) as cofactor.

The protein localises to the cytoplasm. The enzyme catalyses hydrogencarbonate + H(+) = CO2 + H2O. It catalyses the reaction urea = cyanamide + H2O. With respect to regulation, inhibited by acetazolamide. Catalyzes the reversible hydration of carbon dioxide. Can hydrate cyanamide to urea. This is Carbonic anhydrase 1 (CA1) from Macaca mulatta (Rhesus macaque).